The sequence spans 265 residues: MSDMITAAILGLVEGLTEFLPVSSTGHLIITGELLGFTGPKATTFEVAIQLGAILAVVVLYWDRFWGLLRPQPYVRFAGLRGIMLLLLTSLPASVLGLAAHSTIKAHLFTPSTVAIALAVGAIFMLLVERRTERPRYMTLDEMSPALALGIGCFQCLALWPGFSRSAATIMGGMLLGARRGLAAEYSFIAAVPIMFAATGYDLLKSWTLFTPADLPFFATGFVVSFLSAWAAVKLFIALVGRMTFRPFAWYRLAIAPLVYYFMAY.

A run of 7 helical transmembrane segments spans residues alanine 42–tryptophan 62, glycine 82–serine 102, leucine 108–valine 128, methionine 143–phenylalanine 163, glycine 181–tyrosine 201, glycine 221–glycine 241, and phenylalanine 248–alanine 264.

The protein belongs to the UppP family.

The protein resides in the cell inner membrane. It catalyses the reaction di-trans,octa-cis-undecaprenyl diphosphate + H2O = di-trans,octa-cis-undecaprenyl phosphate + phosphate + H(+). Functionally, catalyzes the dephosphorylation of undecaprenyl diphosphate (UPP). Confers resistance to bacitracin. The protein is Undecaprenyl-diphosphatase of Nitratidesulfovibrio vulgaris (strain ATCC 29579 / DSM 644 / CCUG 34227 / NCIMB 8303 / VKM B-1760 / Hildenborough) (Desulfovibrio vulgaris).